A 257-amino-acid polypeptide reads, in one-letter code: MLNNCVVLIRKSVLLSPNLKYIRNMSIDIGGMRIKYKEKDETFLEKHLVSKEPFGQFKSWFEEACARKEILEPNAMCLATVSQEGFPSARFVLCKGYGKEGFKFYTNYGSKKAKDIEGNPNVAATFYWEILNRSVRIEGRVEKLSEDDSTKYFHTRPVVSQIAACASYQSTPIESRDVLCEREKLLEQQYMIPGKEVPKPSYWGGYLLIPRSVEFWQGQRDRLHDRIKFRRPNKGEVSDERLLHEGEDGWVFERLSP.

33-36 (RIKY) is a binding site for substrate. 90–93 (RFVL) lines the FMN pocket. A pyridoxal 5'-phosphate-binding site is contributed by Lys95. FMN is bound by residues 105 to 106 (YT) and Lys112. Positions 152, 156, and 160 each coordinate pyridoxal 5'-phosphate. FMN contacts are provided by residues 169-170 (QS) and Trp216. 222 to 224 (RLH) contacts substrate. Position 226 (Arg226) interacts with FMN.

Belongs to the pyridoxamine 5'-phosphate oxidase family. Homodimer. FMN serves as cofactor. As to expression, expressed in silk gland and fat body of the larva.

The catalysed reaction is pyridoxamine 5'-phosphate + O2 + H2O = pyridoxal 5'-phosphate + H2O2 + NH4(+). The enzyme catalyses pyridoxine 5'-phosphate + O2 = pyridoxal 5'-phosphate + H2O2. Its pathway is cofactor metabolism; pyridoxal 5'-phosphate salvage; pyridoxal 5'-phosphate from pyridoxamine 5'-phosphate: step 1/1. The protein operates within cofactor metabolism; pyridoxal 5'-phosphate salvage; pyridoxal 5'-phosphate from pyridoxine 5'-phosphate: step 1/1. In terms of biological role, catalyzes the oxidation of either pyridoxine 5'-phosphate (PNP) or pyridoxamine 5'-phosphate (PMP) into pyridoxal 5'-phosphate (PLP). The sequence is that of Pyridoxine/pyridoxamine 5'-phosphate oxidase from Bombyx mori (Silk moth).